Consider the following 386-residue polypeptide: O-methyltransferase aunE (386 aa).

Residue W200 coordinates S-adenosyl-L-methionine. The active-site Proton acceptor is the H299.

The protein belongs to the class I-like SAM-binding methyltransferase superfamily. Cation-independent O-methyltransferase family.

The protein operates within secondary metabolite biosynthesis. Its function is as follows. O-methyltransferase; part of the gene cluster that mediates the biosynthesis of aurasperone B, a dimeric gamma-naphthopyrone. The first step in the biosynthesis of aurasperone B is the production of gamma-naphthopyrone precursor YWA1 by the non-reducing polyketide synthase albA, via condensation of one acetyl-CoA starter unit with 6 malonyl-CoA units. YWA1 is then methylated by aunE at position C-6 to yield foncesin which is further methylated at position C-8 by aunD to produce fonsecin B. A key enzyme in the biosynthetic pathway is the cytochrome P450 monooxygenase aunB which catalyzes the oxidative dimerization of fonsecin B to aurasperone B. AunB also catalyzes the oxidative dimerization of rubrofusarin B into aurasperone A. The sequence is that of O-methyltransferase aunE from Aspergillus niger (strain ATCC MYA-4892 / CBS 513.88 / FGSC A1513).